A 1280-amino-acid chain; its full sequence is SET and MYND domain-containing protein DDB_G0284059 (1280 aa).

2 disordered regions span residues 1-35 and 111-167; these read MTKK…SHNH and INKI…QKQQ. 2 stretches are compositionally biased toward low complexity: residues 16–25 and 117–153; these read NNNNNNNHGN and ENSP…QSQP. TPR repeat units lie at residues 272 to 305 and 383 to 416; these read SKGY…YDME and HKLY…IEKR. Positions 439–468 form a coiled coil; sequence QKDEEIEQELDNKNNNSNDDEKQQQQQQQQ. 8 residues coordinate Zn(2+): Cys533, Cys536, Cys546, Cys549, Cys555, Cys559, His568, and Cys572. The MYND-type zinc-finger motif lies at 533 to 572; sequence CYNCFKEILSPIYCKECSNSQYCSNKCLNEDYVKQHGREC. Disordered regions lie at residues 601–642, 659–726, 854–905, and 1039–1079; these read ANKG…QNLN, ALSS…TTTT, QQQQ…PFSP, and AKLQ…LNNN. Low complexity-rich tracts occupy residues 659–697, 712–726, 854–898, 1042–1053, and 1061–1079; these read ALSS…SLTE, SSSS…TTTT, QQQQ…QNPP, QQQQQQQQQHQQ, and NSNP…LNNN. The SET domain occupies 822-965; the sequence is CQLTTYTFAI…KGEEILGCYG (144 aa). One copy of the TPR 3 repeat lies at 1218–1251; sequence GREYSKLGQIYLTLGEIEKSEDAIEKAESILMSW.

Belongs to the class V-like SAM-binding methyltransferase superfamily.

Its function is as follows. Probable methyltransferase. This chain is SET and MYND domain-containing protein DDB_G0284059, found in Dictyostelium discoideum (Social amoeba).